The sequence spans 380 residues: Cytochrome b (380 aa).

4 consecutive transmembrane segments (helical) span residues 34-54, 78-99, 114-134, and 179-199; these read FGSL…LLAM, WLIR…YMHI, WNTG…GYVL, and FFAL…IHLT. The heme b site is built by His84 and His98. Heme b is bound by residues His183 and His197. His202 provides a ligand contact to a ubiquinone. Helical transmembrane passes span 227 to 247, 289 to 309, 321 to 341, and 348 to 368; these read LKDI…ALFS, LGGV…PLLH, LSQL…WIGS, and FIII…ILFP.

It belongs to the cytochrome b family. As to quaternary structure, the cytochrome bc1 complex contains 11 subunits: 3 respiratory subunits (MT-CYB, CYC1 and UQCRFS1), 2 core proteins (UQCRC1 and UQCRC2) and 6 low-molecular weight proteins (UQCRH/QCR6, UQCRB/QCR7, UQCRQ/QCR8, UQCR10/QCR9, UQCR11/QCR10 and a cleavage product of UQCRFS1). This cytochrome bc1 complex then forms a dimer. It depends on heme b as a cofactor.

The protein localises to the mitochondrion inner membrane. Functionally, component of the ubiquinol-cytochrome c reductase complex (complex III or cytochrome b-c1 complex) that is part of the mitochondrial respiratory chain. The b-c1 complex mediates electron transfer from ubiquinol to cytochrome c. Contributes to the generation of a proton gradient across the mitochondrial membrane that is then used for ATP synthesis. In Hydrobates pelagicus (European storm-petrel), this protein is Cytochrome b (MT-CYB).